The following is a 334-amino-acid chain: GTPase Obg (334 aa).

In terms of domain architecture, Obg spans 1 to 159; it reads MRFVDEVVIK…KEVRLELNLL (159 aa). The OBG-type G domain occupies 160–331; sequence ADVALLGLPN…LAKKLNEFLQ (172 aa). GTP-binding positions include 166-173, 191-195, 212-215, 282-285, and 312-314; these read GLPNAGKS, FTTMY, DIPG, NKID, and SAA. Residues Ser173 and Thr193 each coordinate Mg(2+).

It belongs to the TRAFAC class OBG-HflX-like GTPase superfamily. OBG GTPase family. As to quaternary structure, monomer. Mg(2+) is required as a cofactor.

It localises to the cytoplasm. In terms of biological role, an essential GTPase which binds GTP, GDP and possibly (p)ppGpp with moderate affinity, with high nucleotide exchange rates and a fairly low GTP hydrolysis rate. Plays a role in control of the cell cycle, stress response, ribosome biogenesis and in those bacteria that undergo differentiation, in morphogenesis control. This is GTPase Obg from Francisella tularensis subsp. tularensis (strain FSC 198).